Consider the following 907-residue polypeptide: Translation initiation factor IF-2 (907 aa).

Positions 26-317 (DAGMKKSSSD…KPKSMQHGFD (292 aa)) are disordered. 2 stretches are compositionally biased toward basic and acidic residues: residues 28 to 44 (GMKK…EKQK) and 101 to 248 (SAIE…DTDY). A compositionally biased stretch (basic residues) spans 299-308 (KGGRKGKLSK). A tr-type G domain is found at 406–575 (PRAPVVTIMG…LLQAEVLELT (170 aa)). The segment at 415-422 (GHVDHGKT) is G1. Position 415–422 (415–422 (GHVDHGKT)) interacts with GTP. The G2 stretch occupies residues 440-444 (GITQH). The G3 stretch occupies residues 461–464 (DTPG). Residues 461–465 (DTPGH) and 515–518 (NKID) each bind GTP. The tract at residues 515–518 (NKID) is G4. Positions 551–553 (SAK) are G5.

It belongs to the TRAFAC class translation factor GTPase superfamily. Classic translation factor GTPase family. IF-2 subfamily.

Its subcellular location is the cytoplasm. In terms of biological role, one of the essential components for the initiation of protein synthesis. Protects formylmethionyl-tRNA from spontaneous hydrolysis and promotes its binding to the 30S ribosomal subunits. Also involved in the hydrolysis of GTP during the formation of the 70S ribosomal complex. The protein is Translation initiation factor IF-2 of Vibrio vulnificus (strain YJ016).